Here is a 1217-residue protein sequence, read N- to C-terminus: Myosin-1 (1217 aa).

Residues 1–26 (MAILKRTNRAKAATAAAPNSTGKSNG) form a disordered region. Residues 10–19 (AKAATAAAPN) show a composition bias toward low complexity. ATP contacts are provided by residues 17-24 (APNSTGKS) and 133-140 (GESGAGKT). One can recognise a Myosin motor domain in the interval 40–720 (VGVDDLTLLS…TLFALEDMRD (681 aa)). Serine 361 carries the post-translational modification Phosphoserine. At tyrosine 363 the chain carries Phosphotyrosine. The interval 409-491 (SIGILDIYGF…PGLFAAMNDA (83 aa)) is actin-binding. 2 consecutive IQ domains span residues 724–744 (DTMA…RSEA) and 745–770 (AACI…EGTK). Serine 742 is modified (phosphoserine). Positions 778–964 (RRRYSILGSR…TIHVGTGLPP (187 aa)) constitute a TH1 domain. Serine 782 carries the phosphoserine modification. Positions 961–1105 (GLPPTSKSKP…PPPPPPPAEV (145 aa)) are disordered. Positions 998 to 1013 (KPVSMPAAKSKPAPMA) are enriched in low complexity. Polar residues predominate over residues 1015–1025 (PVSTAQQTQNR). Low complexity predominate over residues 1045–1075 (TSTTTTIKQATTVSASKPAPSTVTSAASSPS). The segment covering 1076–1088 (NISKPSAPVANNV) has biased composition (polar residues). A compositionally biased stretch (pro residues) spans 1093-1103 (AVPPPPPPPPA). Residues 1106-1165 (EKKDLYLALYDFAGRSPNEMTIKKDEIIEIVQKEPSGWWLALKNGAEGWVPATYVTEYKG) enclose the SH3 domain. Serine 1211 is modified (phosphoserine).

This sequence belongs to the TRAFAC class myosin-kinesin ATPase superfamily. Myosin family. Interacts with cam2. Interacts (via SH3 domain) with vrp1. Phosphorylation of the TEDS site (Ser-361) is required for the polarization of the actin cytoskeleton. Phosphorylation probably activates the myosin-I ATPase activity.

The protein localises to the cytoplasm. It is found in the cytoskeleton. Its subcellular location is the actin patch. In terms of biological role, type-I myosin implicated in the organization of the actin cytoskeleton. Required for proper actin cytoskeleton polarization. At the cell cortex, assembles in patch-like structures together with proteins from the actin-polymerizing machinery and promotes actin assembly. Functions as actin nucleation-promoting factor (NPF) for the Arp2/3 complex. Contributes to proper septation by transporting vesicles containing septal material to the division site and is involved in the formation of sterol-rich membrane domains at the cell division site. Required also for mating. This is Myosin-1 (myo1) from Schizosaccharomyces pombe (strain 972 / ATCC 24843) (Fission yeast).